The sequence spans 94 residues: ESAT-6-like protein EsxI (94 aa).

Belongs to the WXG100 family. ESAT-6 subfamily.

It localises to the secreted. The polypeptide is ESAT-6-like protein EsxI (Mycobacterium tuberculosis (strain CDC 1551 / Oshkosh)).